Reading from the N-terminus, the 371-residue chain is MSKIASEVVATTLNDWYIAIKKQKVDESIKYYSEIKKLFDEMEEDQEVLAYYSLLEERHKMLLHSSRGEPLQKHTYFTEDNQNFITKTNDKLEYNFYLFEAMYEAYNKNYDRAINLYGLAEKKLAEIPDEIEAAEFYSKVSYLYTLVKQSIVAQHYIKNAISIYKRHPDYKCKLATSTMIAAANYADMKRFEEAEQYYLEAIDIAKETKDEFLKAQLFHNLSIVYSDWNKPDKCIESLEKAIGNESWLHSIYYINSLFMMIKELFKIDEKMKAINFYNKAQERLILMENKVYEAKISILYNLYCGELKNNFNNCISNIEFLKQQNELESVDELSYIAAKRFESIGAFEEATSFFNAKIWAEQKMNQVEGIL.

6 TPR repeats span residues 7–42 (EVVA…FDEM), 93–130 (EYNF…IPDE), 175–208 (ATST…AKET), 215–248 (AQLF…ESWL), 254–290 (INSL…MENK), and 331–364 (DELS…EQKM).

Belongs to the Rap family.

The protein localises to the cytoplasm. With respect to regulation, inhibited by PhrK, which prevents RapK-ComA interaction. Its function is as follows. Involved in the regulation of genetic competence development. Inhibits the activity of ComA, a transcriptional factor that regulates the development of genetic competence. Likely affects the activity of additional regulators, in particular Spo0A. This Bacillus subtilis (strain 168) protein is Regulatory protein RapK (rapK).